A 31-amino-acid chain; its full sequence is Cytolysin Oshem 2 (31 aa).

It is found in the secreted. It localises to the nematocyst. The protein localises to the target cell membrane. Functionally, cytolysin that shows weak hemolysis and weak myonecrosis. The polypeptide is Cytolysin Oshem 2 (Olindias sambaquiensis (Hydromedusa)).